The chain runs to 173 residues: Thiol-disulfide oxidoreductase ResA (173 aa).

Residues 10 to 29 traverse the membrane as a helical; Signal-anchor for type II membrane protein segment; it reads VIILLILCGAVGFTLYQGFF. One can recognise a Thioredoxin domain in the interval 35-173; the sequence is MQIGKEAPNF…LEGYLQKITP (139 aa). C73 and C76 form a disulfide bridge.

This sequence belongs to the thioredoxin family. ResA subfamily.

The protein resides in the cell membrane. It functions in the pathway protein modification; cytochrome c assembly. In terms of biological role, thiol-disulfide oxidoreductase which is required in disulfide reduction during c-type cytochrome synthesis. May accept reducing equivalents from CcdA, leading to breakage of disulfide bonds in apocytochrome c; following this reduction heme can be covalently attached. This chain is Thiol-disulfide oxidoreductase ResA, found in Bacillus cereus (strain ZK / E33L).